Consider the following 675-residue polypeptide: DNA ligase (675 aa).

NAD(+) contacts are provided by residues 33-37 (DAEYD), 82-83 (SL), and glutamate 115. Lysine 117 functions as the N6-AMP-lysine intermediate in the catalytic mechanism. NAD(+)-binding residues include arginine 138, glutamate 175, lysine 293, and lysine 317. Cysteine 411, cysteine 414, cysteine 429, and cysteine 435 together coordinate Zn(2+). The BRCT domain maps to 594 to 675 (IADNPLKDKT…LIGYFTTIVS (82 aa)).

This sequence belongs to the NAD-dependent DNA ligase family. LigA subfamily. It depends on Mg(2+) as a cofactor. Mn(2+) is required as a cofactor.

It catalyses the reaction NAD(+) + (deoxyribonucleotide)n-3'-hydroxyl + 5'-phospho-(deoxyribonucleotide)m = (deoxyribonucleotide)n+m + AMP + beta-nicotinamide D-nucleotide.. DNA ligase that catalyzes the formation of phosphodiester linkages between 5'-phosphoryl and 3'-hydroxyl groups in double-stranded DNA using NAD as a coenzyme and as the energy source for the reaction. It is essential for DNA replication and repair of damaged DNA. The protein is DNA ligase of Glaesserella parasuis serovar 5 (strain SH0165) (Haemophilus parasuis).